Here is a 1637-residue protein sequence, read N- to C-terminus: Kinesin-like protein KIF21B (1637 aa).

Residues 8 to 370 (CVKVAVRIRP…LKYANRARNI (363 aa)) enclose the Kinesin motor domain. ATP is bound at residue 87-94 (GQTGAGKT). Coiled coils occupy residues 376–604 (VNQD…EEEG) and 631–824 (NFQA…ALRR). The interval 400–1099 (MEYKAGKRVI…LQALIYNVQQ (700 aa)) is interaction with TRIM3. Low complexity predominate over residues 509 to 533 (ASARSPYSLGASPAAPAFGGSPASS). Disordered stretches follow at residues 509 to 538 (ASAR…EDAS) and 552 to 628 (KKKE…PEEK). The span at 578–627 (NSEETDENEAEEEEEERDESGCEEEEGREDEDEDSGSEESLVDSDSDPEE) shows a compositional bias: acidic residues. The residue at position 579 (serine 579) is a Phosphoserine. The residue at position 582 (threonine 582) is a Phosphothreonine. 2 disordered regions span residues 830-865 (SERV…GARS) and 880-906 (FLGD…GASQ). Residues 846–865 (SGAEVSASTTSSEAESGARS) show a composition bias toward low complexity. The stretch at 928-1016 (MQRMTIVNLE…EETKEELDST (89 aa)) forms a coiled coil. Residues serine 1149, serine 1167, and serine 1215 each carry the phosphoserine modification. The span at 1194–1217 (RTVSLPTRGSTFPRQSRATETSPL) shows a compositional bias: polar residues. Residues 1194–1251 (RTVSLPTRGSTFPRQSRATETSPLTRRKSYDRGQPIRSTDVGFTPPSSPPTRPRNDRN) form a disordered region. Threonine 1237 carries the post-translational modification Phosphothreonine. Serine 1241 is modified (phosphoserine). WD repeat units lie at residues 1306–1343 (GHTK…EIAA), 1346–1384 (GHPN…KCIR), 1410–1448 (QGEH…PVGK), 1451–1493 (GHIG…TGTI), 1502–1539 (PHYD…LIQQ), 1543–1582 (AHKD…PIGE), and 1585–1622 (GHDS…TPCL).

The protein belongs to the TRAFAC class myosin-kinesin ATPase superfamily. Kinesin family. In terms of assembly, interacts with TRIM3; the interaction positively affects motility of KIF21B. Interacts with GABARAP and GABA(A) receptor subunits: GABRG2, GABRA1 and GABRA2. May interact with GABA(A) receptor subunits: GABRB2 and GABRB3.

It localises to the cytoplasm. The protein resides in the cytoskeleton. It is found in the cell projection. Its subcellular location is the dendrite. The protein localises to the growth cone. It localises to the axon. The protein resides in the cytoplasmic vesicle. Functionally, plus-end directed microtubule-dependent motor protein which displays processive activity. Is involved in regulation of microtubule dynamics, synapse function and neuronal morphology, including dendritic tree branching and spine formation. Plays a role in lerning and memory. Involved in delivery of gamma-aminobutyric acid (GABA(A)) receptor to cell surface. The chain is Kinesin-like protein KIF21B (KIF21B) from Homo sapiens (Human).